The sequence spans 332 residues: Holliday junction branch migration complex subunit RuvB (332 aa).

The large ATPase domain (RuvB-L) stretch occupies residues 1-181 (MTRFLDSDAM…FGITGHMEYY (181 aa)). Residues leucine 20, arginine 21, glycine 62, lysine 65, threonine 66, threonine 67, 128–130 (EDF), arginine 171, tyrosine 181, and arginine 218 contribute to the ATP site. Threonine 66 serves as a coordination point for Mg(2+). Residues 182-252 (EENDLTEIIE…ITDKALTMLD (71 aa)) are small ATPAse domain (RuvB-S). The head domain (RuvB-H) stretch occupies residues 255–332 (HEGLDYVDQK…EHLGYQRFDK (78 aa)). DNA-binding residues include arginine 291, arginine 310, arginine 312, and arginine 315.

It belongs to the RuvB family. Homohexamer. Forms an RuvA(8)-RuvB(12)-Holliday junction (HJ) complex. HJ DNA is sandwiched between 2 RuvA tetramers; dsDNA enters through RuvA and exits via RuvB. An RuvB hexamer assembles on each DNA strand where it exits the tetramer. Each RuvB hexamer is contacted by two RuvA subunits (via domain III) on 2 adjacent RuvB subunits; this complex drives branch migration. In the full resolvosome a probable DNA-RuvA(4)-RuvB(12)-RuvC(2) complex forms which resolves the HJ.

The protein localises to the cytoplasm. The enzyme catalyses ATP + H2O = ADP + phosphate + H(+). The RuvA-RuvB-RuvC complex processes Holliday junction (HJ) DNA during genetic recombination and DNA repair, while the RuvA-RuvB complex plays an important role in the rescue of blocked DNA replication forks via replication fork reversal (RFR). RuvA specifically binds to HJ cruciform DNA, conferring on it an open structure. The RuvB hexamer acts as an ATP-dependent pump, pulling dsDNA into and through the RuvAB complex. RuvB forms 2 homohexamers on either side of HJ DNA bound by 1 or 2 RuvA tetramers; 4 subunits per hexamer contact DNA at a time. Coordinated motions by a converter formed by DNA-disengaged RuvB subunits stimulates ATP hydrolysis and nucleotide exchange. Immobilization of the converter enables RuvB to convert the ATP-contained energy into a lever motion, pulling 2 nucleotides of DNA out of the RuvA tetramer per ATP hydrolyzed, thus driving DNA branch migration. The RuvB motors rotate together with the DNA substrate, which together with the progressing nucleotide cycle form the mechanistic basis for DNA recombination by continuous HJ branch migration. Branch migration allows RuvC to scan DNA until it finds its consensus sequence, where it cleaves and resolves cruciform DNA. This chain is Holliday junction branch migration complex subunit RuvB, found in Streptococcus agalactiae serotype V (strain ATCC BAA-611 / 2603 V/R).